The following is a 374-amino-acid chain: Alcohol dehydrogenase 3, mitochondrial (374 aa).

Residues 1–26 (MLRLTSARSIVSPLRKGAFGSIRTLA) constitute a mitochondrion transit peptide. Residues C70, H93, C124, C127, C130, C138, and C180 each contribute to the Zn(2+) site. NAD(+)-binding positions include 204–210 (GAAGGLG), D228, K233, 295–297 (VGL), and R367.

The protein belongs to the zinc-containing alcohol dehydrogenase family. Homotetramer. The cofactor is Zn(2+).

Its subcellular location is the mitochondrion matrix. The enzyme catalyses a primary alcohol + NAD(+) = an aldehyde + NADH + H(+). The catalysed reaction is a secondary alcohol + NAD(+) = a ketone + NADH + H(+). In Kluyveromyces lactis (strain ATCC 8585 / CBS 2359 / DSM 70799 / NBRC 1267 / NRRL Y-1140 / WM37) (Yeast), this protein is Alcohol dehydrogenase 3, mitochondrial (ADH3).